We begin with the raw amino-acid sequence, 260 residues long: GTP cyclohydrolase FolE2 (260 aa).

This sequence belongs to the GTP cyclohydrolase IV family.

It carries out the reaction GTP + H2O = 7,8-dihydroneopterin 3'-triphosphate + formate + H(+). It participates in cofactor biosynthesis; 7,8-dihydroneopterin triphosphate biosynthesis; 7,8-dihydroneopterin triphosphate from GTP: step 1/1. Converts GTP to 7,8-dihydroneopterin triphosphate. The chain is GTP cyclohydrolase FolE2 from Desulfosudis oleivorans (strain DSM 6200 / JCM 39069 / Hxd3) (Desulfococcus oleovorans).